The chain runs to 731 residues: Catalase-peroxidase (731 aa).

The interval 1–24 is disordered; the sequence is MSTEPNCPFSGNARKHTAAGAPSN. Residues 96 to 219 constitute a cross-link (tryptophyl-tyrosyl-methioninium (Trp-Tyr) (with M-245)); that stretch reads WHSAGTYRVS…LGAVQMGLIY (124 aa). His-97 (proton acceptor) is an active-site residue. Residues 219–245 constitute a cross-link (tryptophyl-tyrosyl-methioninium (Tyr-Met) (with W-96)); sequence YVNPEGPNGNPDPIAAARDIRETFARM. Residue His-260 coordinates heme b. A disordered region spans residues 339 to 365; the sequence is GAQQWKPKGDAGAGTVPDAHDPSKRHA.

This sequence belongs to the peroxidase family. Peroxidase/catalase subfamily. As to quaternary structure, homodimer or homotetramer. Heme b serves as cofactor. Post-translationally, formation of the three residue Trp-Tyr-Met cross-link is important for the catalase, but not the peroxidase activity of the enzyme.

The enzyme catalyses H2O2 + AH2 = A + 2 H2O. It carries out the reaction 2 H2O2 = O2 + 2 H2O. In terms of biological role, bifunctional enzyme with both catalase and broad-spectrum peroxidase activity. The polypeptide is Catalase-peroxidase (Polaromonas sp. (strain JS666 / ATCC BAA-500)).